The following is a 296-amino-acid chain: Factor associated with metabolism and energy (296 aa).

G2 carries the N-myristoyl glycine lipid modification. Basic and acidic residues-rich tracts occupy residues 173–187 and 267–281; these read SLHG…SPRD and EQGK…LVRT. Disordered stretches follow at residues 173 to 204 and 256 to 281; these read SLHG…DDHD and LLWD…LVRT.

It is found in the cell membrane. The protein resides in the cytoplasmic vesicle. Functionally, may be involved in tuning the metabolism, energy expenditure, and excretion processes. The protein is Factor associated with metabolism and energy of Homo sapiens (Human).